Reading from the N-terminus, the 362-residue chain is Manganese peroxidase 3 (362 aa).

Positions 1-18 (MAFKQLLTAISIVSVANA) are cleaved as a signal peptide. A propeptide spanning residues 19 to 23 (ALTRR) is cleaved from the precursor. Disulfide bonds link Cys26/Cys39, Cys38/Cys309, Cys58/Cys144, and Cys273/Cys338. Mn(2+) is bound by residues Glu60 and Glu64. Catalysis depends on His71, which acts as the Proton acceptor. Ca(2+)-binding residues include Asp72, Gly90, Asp92, and Ser94. Asn126 carries N-linked (GlcNAc...) asparagine glycosylation. A heme b-binding site is contributed by His200. Thr201 contributes to the Ca(2+) binding site. Mn(2+) is bound at residue Asp206. Positions 218, 220, 223, and 225 each coordinate Ca(2+). Residues 341–362 (TPFPSLSADPGPATSVAPVPPS) are disordered.

This sequence belongs to the peroxidase family. Ligninase subfamily. Heme b is required as a cofactor. Ca(2+) serves as cofactor.

The protein resides in the secreted. The enzyme catalyses 2 Mn(2+) + H2O2 + 2 H(+) = 2 Mn(3+) + 2 H2O. Catalyzes the oxidation of Mn(2+) to Mn(3+). The latter, acting as a diffusible redox mediator, is capable of oxidizing a variety of lignin compounds. This isozyme is also able to oxidize phenols and amines in the absence of Mn(2+), similar to versatile peroxidases. The sequence is that of Manganese peroxidase 3 (mnp3) from Phlebia radiata (White-rot fungus).